The following is a 33-amino-acid chain: MLITLGWASLAALFSFSIAMVVWGRNGDGSMNF.

Residues 2–22 (LITLGWASLAALFSFSIAMVV) form a helical membrane-spanning segment.

Belongs to the PetN family. In terms of assembly, the 4 large subunits of the cytochrome b6-f complex are cytochrome b6, subunit IV (17 kDa polypeptide, PetD), cytochrome f and the Rieske protein, while the 4 small subunits are PetG, PetL, PetM and PetN. The complex functions as a dimer.

It localises to the plastid. The protein localises to the organellar chromatophore thylakoid membrane. In terms of biological role, component of the cytochrome b6-f complex, which mediates electron transfer between photosystem II (PSII) and photosystem I (PSI), cyclic electron flow around PSI, and state transitions. This Paulinella chromatophora protein is Cytochrome b6-f complex subunit 8.